Consider the following 121-residue polypeptide: Phosphoribosyl-ATP pyrophosphatase (121 aa).

Belongs to the PRA-PH family.

The protein localises to the cytoplasm. The enzyme catalyses 1-(5-phospho-beta-D-ribosyl)-ATP + H2O = 1-(5-phospho-beta-D-ribosyl)-5'-AMP + diphosphate + H(+). It functions in the pathway amino-acid biosynthesis; L-histidine biosynthesis; L-histidine from 5-phospho-alpha-D-ribose 1-diphosphate: step 2/9. This is Phosphoribosyl-ATP pyrophosphatase from Burkholderia cenocepacia (strain HI2424).